The primary structure comprises 184 residues: Photosystem I assembly protein Ycf4 (184 aa).

The next 2 helical transmembrane spans lie at 22–42 (FFWA…GTSS) and 57–77 (IIFF…LFIS).

This sequence belongs to the Ycf4 family.

The protein localises to the plastid. Its subcellular location is the chloroplast thylakoid membrane. Seems to be required for the assembly of the photosystem I complex. The chain is Photosystem I assembly protein Ycf4 from Aethionema cordifolium (Lebanon stonecress).